A 441-amino-acid chain; its full sequence is Ribulose bisphosphate carboxylase large chain (441 aa).

Substrate contacts are provided by asparagine 89 and threonine 139. Lysine 141 acts as the Proton acceptor in catalysis. Residue lysine 143 participates in substrate binding. Mg(2+) is bound by residues lysine 167, aspartate 169, and glutamate 170. N6-carboxylysine is present on lysine 167. Histidine 260 functions as the Proton acceptor in the catalytic mechanism. Positions 261, 293, and 345 each coordinate substrate.

It belongs to the RuBisCO large chain family. Type I subfamily. In terms of assembly, heterohexadecamer of 8 large chains and 8 small chains; disulfide-linked. The disulfide link is formed within the large subunit homodimers. Requires Mg(2+) as cofactor. In terms of processing, the disulfide bond which can form in the large chain dimeric partners within the hexadecamer appears to be associated with oxidative stress and protein turnover.

The protein localises to the plastid. It is found in the chloroplast. It carries out the reaction 2 (2R)-3-phosphoglycerate + 2 H(+) = D-ribulose 1,5-bisphosphate + CO2 + H2O. The enzyme catalyses D-ribulose 1,5-bisphosphate + O2 = 2-phosphoglycolate + (2R)-3-phosphoglycerate + 2 H(+). In terms of biological role, ruBisCO catalyzes two reactions: the carboxylation of D-ribulose 1,5-bisphosphate, the primary event in carbon dioxide fixation, as well as the oxidative fragmentation of the pentose substrate in the photorespiration process. Both reactions occur simultaneously and in competition at the same active site. This Fouquieria splendens (Ocotillo) protein is Ribulose bisphosphate carboxylase large chain.